The following is a 336-amino-acid chain: Myb family transcription factor PHL8 (336 aa).

Residues 31–91 form the HTH myb-type domain; sequence TDAKPRLKWT…HLQKYRLGKS (61 aa). The segment at residues 62-87 is a DNA-binding region (H-T-H motif); it reads PKGLMKVMEIPGLTLYHLKSHLQKYR. The segment at 100–134 is disordered; the sequence is EVSSASENQEVESKNDSRDLRGCSVTEENSNPAKE. Positions 110-120 are enriched in basic and acidic residues; sequence VESKNDSRDLR. The stretch at 139-159 forms a coiled coil; that stretch reads TEALQMQMEVQKKLHEQIEVQ. An LHEQLE motif is present at residues 152–157; it reads LHEQIE.

This sequence belongs to the MYB-CC family.

It localises to the nucleus. In Arabidopsis thaliana (Mouse-ear cress), this protein is Myb family transcription factor PHL8.